Consider the following 393-residue polypeptide: Proteasome-activating nucleotidase (393 aa).

Residues 15–53 (DEVQLVRLLEEKIKSLQIEIENLRKELNYYKAEMEKMLS) are a coiled coil. ATP is bound by residues 178–183 (GTGKTM) and Y317. Residues 365–393 (MNDLVEAINKINVKRNKMESMKERREKYS) are a coiled coil. Positions 391 to 393 (KYS) are docks into pockets in the proteasome alpha-ring to cause gate opening.

This sequence belongs to the AAA ATPase family. In terms of assembly, homohexamer. The hexameric complex has a two-ring architecture resembling a top hat that caps the 20S proteasome core at one or both ends. Upon ATP-binding, the C-terminus of PAN interacts with the alpha-rings of the proteasome core by binding to the intersubunit pockets.

Its subcellular location is the cytoplasm. Functionally, ATPase which is responsible for recognizing, binding, unfolding and translocation of substrate proteins into the archaeal 20S proteasome core particle. Is essential for opening the gate of the 20S proteasome via an interaction with its C-terminus, thereby allowing substrate entry and access to the site of proteolysis. Thus, the C-termini of the proteasomal ATPase function like a 'key in a lock' to induce gate opening and therefore regulate proteolysis. Unfolding activity requires energy from ATP hydrolysis, whereas ATP binding alone promotes ATPase-20S proteasome association which triggers gate opening, and supports translocation of unfolded substrates. This chain is Proteasome-activating nucleotidase, found in Saccharolobus solfataricus (strain ATCC 35092 / DSM 1617 / JCM 11322 / P2) (Sulfolobus solfataricus).